A 934-amino-acid polypeptide reads, in one-letter code: MPKITMQQFQKNSYLADNNAGYIETLYENFLKDPHSVNEEWRSYFRTLTNGASTPDISHATIREEFRELARKPRSISPTAITPAAEQAAVDLLIEGYRRFGHLNAKINPLGDNRPVDSRLELGHYNLTESDFNKTFATYGLLNKPKATLKEIYTRLREIYCGSIGVQYSTISDERERNWLRDYVEQRLPSIEFDKETKRNILQQLVTAESLEKYLDTKYVGQVRYSLEGGDSLIPLLDELTKRARHQKIEEIVICMAHRGRVNVLLNIMGQSAAELFQEFEGKKDYGLMSGDVKYHRGYSRDVKTDAGPIHLSLAFNPSHLEFICPVAMGSVRARQERQNGHKRDYAMTVMIHGDASFSGEGIVMEALSMSQTRAHHVGGSIHIILNNQVGFTTSNPHDARSSMYCSDIAKMLDAPVFHVNGDDPEAVVAVTQLALDYRMAFHKDVFIDLVCYRRHGHQEVDDPMPTQPAMYKVIQEHPTTRTLYAKNLIEKKLCTAEEVDQWIDDYRDRLDRGRQLVETLPEGLSAHYAANWTPYLGQDWTTLVDTTLPLKKLKALGKKFSTLPNTLHLHRKVEAIYKARLEMAEGKTPMDWGFAEMLAYASLLEEGFSVRLVGQDSRRGTFFHRHAVVFDQETGKEYEPLKHLSDKQAAPHIYDSLLCEAGALGFEYGYSTADPNSLVIWEAQFGDFANVAQVIVDQFISSGWQKWNRLSGIVLFLPHGYEGKGPEHSSARLERYLQLCAQNNMQVCAPTTPSQIFHLLRRQVLRPYRKPLVVLTPKSVLRNKLAVSSLEDLARGQLKLLIPEIEKHDPKKITRVILCSGKVYYDLLAKRREHKGKLNHIAMIRIEQLYPFPYDELKAELEKYPNAKQVIWCQEEPKNQGAWFCTRHRLIKCMRDDQTLEYVGRSAFAAPAAGYSALYVKLQEQLVNQALEI.

It belongs to the alpha-ketoglutarate dehydrogenase family. In terms of assembly, homodimer. Part of the 2-oxoglutarate dehydrogenase (OGDH) complex composed of E1 (2-oxoglutarate dehydrogenase), E2 (dihydrolipoamide succinyltransferase) and E3 (dihydrolipoamide dehydrogenase); the complex contains multiple copies of the three enzymatic components (E1, E2 and E3). It depends on thiamine diphosphate as a cofactor.

The enzyme catalyses N(6)-[(R)-lipoyl]-L-lysyl-[protein] + 2-oxoglutarate + H(+) = N(6)-[(R)-S(8)-succinyldihydrolipoyl]-L-lysyl-[protein] + CO2. Functionally, E1 component of the 2-oxoglutarate dehydrogenase (OGDH) complex which catalyzes the decarboxylation of 2-oxoglutarate, the first step in the conversion of 2-oxoglutarate to succinyl-CoA and CO(2). This is 2-oxoglutarate dehydrogenase E1 component (sucA) from Coxiella burnetii (strain RSA 493 / Nine Mile phase I).